We begin with the raw amino-acid sequence, 290 residues long: ATP synthase gamma chain (290 aa).

The protein belongs to the ATPase gamma chain family. As to quaternary structure, F-type ATPases have 2 components, CF(1) - the catalytic core - and CF(0) - the membrane proton channel. CF(1) has five subunits: alpha(3), beta(3), gamma(1), delta(1), epsilon(1). CF(0) has three main subunits: a, b and c.

It localises to the cell inner membrane. In terms of biological role, produces ATP from ADP in the presence of a proton gradient across the membrane. The gamma chain is believed to be important in regulating ATPase activity and the flow of protons through the CF(0) complex. The chain is ATP synthase gamma chain from Phenylobacterium zucineum (strain HLK1).